The primary structure comprises 265 residues: Indole-3-glycerol phosphate synthase (265 aa).

Belongs to the TrpC family.

The enzyme catalyses 1-(2-carboxyphenylamino)-1-deoxy-D-ribulose 5-phosphate + H(+) = (1S,2R)-1-C-(indol-3-yl)glycerol 3-phosphate + CO2 + H2O. Its pathway is amino-acid biosynthesis; L-tryptophan biosynthesis; L-tryptophan from chorismate: step 4/5. The sequence is that of Indole-3-glycerol phosphate synthase from Desulforamulus reducens (strain ATCC BAA-1160 / DSM 100696 / MI-1) (Desulfotomaculum reducens).